The primary structure comprises 318 residues: Lipid A biosynthesis acyltransferase (318 aa).

A helical membrane pass occupies residues 27-47; it reads PQYWGIWLGIFFLLLLAFVPF. The HXXXXD motif signature appears at 145–150; it reads HGWAID.

This sequence belongs to the LpxL/LpxM/LpxP family. LpxM subfamily.

It localises to the cell inner membrane. The catalysed reaction is an alpha-Kdo-(2-&gt;4)-alpha-Kdo-(2-&gt;6)-(acyl)-lipid IVA + a fatty acyl-[ACP] = an alpha-Kdo-(2-&gt;4)-alpha-Kdo-(2-&gt;6)-lipid A + holo-[ACP]. It participates in glycolipid biosynthesis; KDO(2)-lipid A biosynthesis; KDO(2)-lipid A from CMP-3-deoxy-D-manno-octulosonate and lipid IV(A): step 4/4. It functions in the pathway bacterial outer membrane biogenesis; lipopolysaccharide biosynthesis. Functionally, catalyzes the transfer of an acyl chain from an acyl-[acyl-carrier-protein] (ACP) to a Kdo(2)-(acyl)-lipid IV(A) to form a Kdo(2)-lipid A. The polypeptide is Lipid A biosynthesis acyltransferase (Haemophilus influenzae (strain ATCC 51907 / DSM 11121 / KW20 / Rd)).